The chain runs to 236 residues: Glucosamine-6-phosphate deaminase (236 aa).

Asp62 (proton acceptor; for enolization step) is an active-site residue. Asn128 (for ring-opening step) is an active-site residue. The active-site Proton acceptor; for ring-opening step is the His130. Glu135 serves as the catalytic For ring-opening step.

Belongs to the glucosamine/galactosamine-6-phosphate isomerase family. NagB subfamily.

The catalysed reaction is alpha-D-glucosamine 6-phosphate + H2O = beta-D-fructose 6-phosphate + NH4(+). The protein operates within amino-sugar metabolism; N-acetylneuraminate degradation; D-fructose 6-phosphate from N-acetylneuraminate: step 5/5. Catalyzes the reversible isomerization-deamination of glucosamine 6-phosphate (GlcN6P) to form fructose 6-phosphate (Fru6P) and ammonium ion. The sequence is that of Glucosamine-6-phosphate deaminase from Oenococcus oeni (strain ATCC BAA-331 / PSU-1).